Here is a 161-residue protein sequence, read N- to C-terminus: MSVSVWPPLLLLLLLLLLWAVPTFQDKNTRVSAYKGIGEMCRNNSECQSDCCVTNSLNPQKFCTSQTVFLECVPWRKPNGFLCEENTECHSNCCIRTSSNPDRFCSSKTIFMQCISWRKPEGAICQHHLECWDLCCLPLSENSPSSHCTKRTGLLALCLPV.

Positions 1–25 are cleaved as a signal peptide; that stretch reads MSVSVWPPLLLLLLLLLLWAVPTFQ.

This Mus musculus (Mouse) protein is Leucine-rich colipase-like protein 1 (Lrcol1).